We begin with the raw amino-acid sequence, 286 residues long: Pyridoxal kinase PdxY (286 aa).

Residues Ser-9 and 44–45 (TQ) contribute to the substrate site. ATP-binding positions include Asp-111, Ala-143, Glu-148, Lys-181, and 208 to 211 (RPLV). Residue Asp-223 coordinates substrate.

It belongs to the pyridoxine kinase family. PdxY subfamily. In terms of assembly, homodimer. Requires Mg(2+) as cofactor.

The catalysed reaction is pyridoxal + ATP = pyridoxal 5'-phosphate + ADP + H(+). It participates in cofactor metabolism; pyridoxal 5'-phosphate salvage; pyridoxal 5'-phosphate from pyridoxal: step 1/1. In terms of biological role, pyridoxal kinase involved in the salvage pathway of pyridoxal 5'-phosphate (PLP). Catalyzes the phosphorylation of pyridoxal to PLP. The sequence is that of Pyridoxal kinase PdxY from Salmonella choleraesuis (strain SC-B67).